A 697-amino-acid polypeptide reads, in one-letter code: Probable translocation protein y4yR (697 aa).

A run of 8 helical transmembrane segments spans residues 20 to 40 (VALMLLLAVSMMVMPIPVMAV), 42 to 62 (ALIGFNMGLAVLLLMAALYVS), 67 to 87 (FSSLPGVILLSTVFRLALTVA), 107 to 127 (SFVISGNIVVGFVIFLVVTMV), 200 to 220 (SIAGLVVICINMLGGISIGLL), 235 to 255 (LLTIGDALISQIPALLLSITA), 293 to 313 (VAMGFVPGFPLPVFFMLAAVF), and 372 to 392 (IARISQLVSADLGIIVPPIPV). Residues 675-697 (IRLPPSNGTSGEPRSIRPSATTG) form a disordered region. Positions 680-697 (SNGTSGEPRSIRPSATTG) are enriched in polar residues.

The protein belongs to the FHIPEP (flagella/HR/invasion proteins export pore) family.

The protein localises to the cell inner membrane. In terms of biological role, could be involved in the secretion of an unknown factor. This Sinorhizobium fredii (strain NBRC 101917 / NGR234) protein is Probable translocation protein y4yR.